A 4060-amino-acid polypeptide reads, in one-letter code: Replicase polyprotein 1a (4060 aa).

The CoV Nsp1 globular domain maps to 2 to 109 (FYNQVTLAVA…DFDVVFGHGA (108 aa)). A CoV Nsp2 N-terminal domain is found at 112–358 (VVFVDKYMCG…NTLLSNQLRL (247 aa)). Cysteine 245, cysteine 247, cysteine 264, and cysteine 265 together coordinate Zn(2+). Positions 245-265 (CNCGSESWSVGAWDGYLSSCC) are C4. The region spanning 388 to 778 (YDDILTNNKP…LDVYNGFLET (391 aa)) is the CoV Nsp2 middle domain. Residues 776–898 (LETVCSVAYT…LPVAFTKLAG (123 aa)) enclose the CoV Nsp2 C-terminal domain. The Ubiquitin-like 1 domain maps to 899-994 (GKISFSDDVI…VMISQWPISN (96 aa)). The region spanning 1021–1262 (EVDIIEQPFE…EAGEVKPFAV (242 aa)) is the Peptidase C16 1 domain. The For PL1-PRO activity role is filled by cysteine 1062. Cysteine 1134, cysteine 1136, cysteine 1163, and cysteine 1165 together coordinate Zn(2+). The C4-type 1 zinc finger occupies 1134 to 1165 (CDCGKKFDDQVGCLFWIMPYTKLFQKGECCIC). Catalysis depends on for PL1-PRO activity residues histidine 1212 and aspartate 1225. One can recognise a Macro domain in the interval 1263–1421 (YKNVKFYLGD…AVLKFLDGLD (159 aa)). One can recognise a Ubiquitin-like 2 domain in the interval 1579 to 1633 (NDNVVLKITEDGINVKDVVVESSKSLGKQLGVVSDGVDSFEGVLPINTDTVLSVA). One can recognise a Peptidase C16 2 domain in the interval 1640-1886 (AFYGFEKAAL…VPTIVSEKIS (247 aa)). The active-site For PL2-PRO activity is the cysteine 1678. Zn(2+) is bound by residues cysteine 1757, cysteine 1760, cysteine 1786, and histidine 1788. Residues 1757–1788 (CDICKSTVVEVKSAIVCASVLKDGCDVGFCPH) form a C4-type 2; atypical zinc finger. Active-site for PL2-PRO activity residues include histidine 1836 and aspartate 1841. 2 helical membrane-spanning segments follow: residues 1903-1923 (DFVM…FSLL) and 1968-1988 (IVTL…VFMI). Residues 1903 to 2131 (DFVMNNIVLF…LFVRHIIVGC (229 aa)) are HD1. In terms of domain architecture, 3Ecto spans 1983-2048 (ALVFMIVQFS…TSLVWKHIRD (66 aa)). Cystine bridges form between cysteine 1999-cysteine 2026 and cysteine 2017-cysteine 2023. The next 3 helical transmembrane spans lie at 2050–2070 (ILIS…GNMY), 2073–2093 (FGLL…LGFH), and 2111–2131 (FLAT…IVGC). The Y1 stretch occupies residues 2122–2212 (LFVRHIIVGC…VVKTAVQPTA (91 aa)). A CoV Nsp3 Y domain is found at 2122–2461 (LFVRHIIVGC…PATSIVAKQG (340 aa)). Zn(2+) contacts are provided by histidine 2126, cysteine 2131, cysteine 2136, cysteine 2139, cysteine 2172, histidine 2175, cysteine 2179, and cysteine 2182. Residues 2126–2139 (HIIVGCNNADCVAC) are ZF1. Positions 2172-2182 (CNKHNFFCVNC) are ZF2. The segment at 2213-2302 (PAYVIIDKVD…LVNSELLSTL (90 aa)) is Y2. Residues 2213 to 2461 (PAYVIIDKVD…PATSIVAKQG (249 aa)) are coV-Y. The interval 2303-2359 (SVDFNGVLHKAYVDVLCNSFFKELTANMSMAECKATLGLTVSDDDFVSAVANAHRYD) is Y3. The Y4 stretch occupies residues 2360–2461 (VLLSDLSFNN…PATSIVAKQG (102 aa)). 5 consecutive transmembrane segments (helical) span residues 2468–2488 (YNFL…VSFI), 2727–2747 (GHML…FLVT), 2752–2769 (VFGD…ATLI), 2772–2792 (ISYV…LYFV), and 2800–2820 (AWIW…WWLL). Positions 2468-2820 (YNFLWYVCLF…YFLLIPWWLL (353 aa)) are HD2. The Nsp4C domain maps to 2844 to 2939 (LFEGDKFIGT…PTISYNSTLQ (96 aa)). The Peptidase C30 domain occupies 2940-3242 (SGLKKMAQPS…VKQMYGVNLQ (303 aa)). Residues histidine 2980 and cysteine 3083 each act as for 3CL-PRO activity in the active site. 7 helical membrane-spanning segments follow: residues 3254–3274 (FLFS…TNTI), 3279–3299 (VILT…TMFL), 3303–3323 (FLFL…YNCV), 3342–3362 (VLQM…VVFL), 3376–3396 (FTYV…GDFL), 3397–3417 (SLLV…AIVF), and 3442–3462 (LVVY…LYWF). Residues 3254–3462 (FLFSVFFTMF…CTYWGILYWF (209 aa)) are HD3. A RdRp Nsp7 cofactor domain is found at 3522–3604 (SKLTDLKCTN…SYFDNSSTLQ (83 aa)). The RdRp Nsp8 cofactor domain occupies 3605-3799 (SVASSFVSMP…LNCERVVKLQ (195 aa)). The Nsp9 ssRNA-binding domain occupies 3800–3908 (NNEIMPGKLK…GFIGATIRLQ (109 aa)). The ExoN/MTase coactivator domain occupies 3909 to 4047 (AGKQTELAVN…DRTTIQSVDI (139 aa)). Zn(2+) is bound by residues cysteine 3982, cysteine 3985, histidine 3991, cysteine 3998, cysteine 4024, cysteine 4027, cysteine 4035, and cysteine 4037. Zinc fingers lie at residues 3982-3998 (CLYC…DGYC) and 4024-4037 (CNVC…GCAC).

This sequence belongs to the coronaviruses polyprotein 1ab family. As to quaternary structure, 3CL-PRO exists as monomer and homodimer. Eight copies of nsp7 and eight copies of nsp8 assemble to form a heterohexadecamer. Nsp9 is a dimer. Nsp10 forms a dodecamer. Specific enzymatic cleavages in vivo by its own proteases yield mature proteins. 3CL-PRO and PL-PRO proteinases are autocatalytically processed.

The protein resides in the host membrane. Its subcellular location is the host cytoplasm. It localises to the host perinuclear region. It catalyses the reaction Thiol-dependent hydrolysis of ester, thioester, amide, peptide and isopeptide bonds formed by the C-terminal Gly of ubiquitin (a 76-residue protein attached to proteins as an intracellular targeting signal).. In terms of biological role, the papain-like proteinase 1 (PLP1) and papain-like proteinase 2 (PLP2) are responsible for the cleavages located at the N-terminus of the replicase polyprotein. In addition, PLP2 possesses a deubiquitinating/deISGylating activity and processes both 'Lys-48'- and 'Lys-63'-linked polyubiquitin chains from cellular substrates. PLP2 also antagonizes innate immune induction of type I interferon by blocking the nuclear translocation of host IRF-3. Functionally, responsible for the majority of cleavages as it cleaves the C-terminus of replicase polyprotein at 11 sites. Recognizes substrates containing the core sequence [ILMVF]-Q-|-[SGACN]. Inhibited by the substrate-analog Cbz-Val-Asn-Ser-Thr-Leu-Gln-CMK. Also contains an ADP-ribose-1''-phosphate (ADRP)-binding function. Nsp7-nsp8 hexadecamer may possibly confer processivity to the polymerase, maybe by binding to dsRNA or by producing primers utilized by the latter. Its function is as follows. Nsp9 is a ssRNA-binding protein. This chain is Replicase polyprotein 1a, found in Homo sapiens (Human).